We begin with the raw amino-acid sequence, 1939 residues long: Myosin-6 (1939 aa).

A Myosin N-terminal SH3-like domain is found at 32 to 81 (DIRTECFVPDDKEEFVKAKILSREGGKVIAETENGKTVTVKEDQVLQQNP). A Myosin motor domain is found at 85–780 (DKIEDMAMLT…LLGLLEEMRD (696 aa)). Lysine 129 is subject to N6,N6,N6-trimethyllysine. ATP is bound at residue 178-185 (GESGAGKT). Threonine 379 is subject to Phosphothreonine. Serine 417 carries the phosphoserine modification. 2 actin-binding regions span residues 657–679 (LNKLMTNLRTTHPHFVRCIIPNE) and 759–773 (KFGHTKVFFKAGLLG). Residues 783-812 (LSRIITRMQAQARGQLMRIEFKKIVERRDA) form the IQ domain. Residues 842 to 1939 (LKSAETEKEM…GAKQKMHDEE (1098 aa)) are a coiled coil. Serine 1139 carries the phosphoserine modification. Tyrosine 1261 carries the post-translational modification Phosphotyrosine. At serine 1271 the chain carries Phosphoserine. Threonine 1277 and threonine 1284 each carry phosphothreonine. Serine 1309 bears the Phosphoserine mark. Tyrosine 1310 carries the post-translational modification Phosphotyrosine. Position 1311 is a phosphothreonine (threonine 1311). Serine 1512 is subject to Phosphoserine. Position 1515 is a phosphothreonine (threonine 1515). Composition is skewed to basic and acidic residues over residues 1826–1837 (GELEAEQKRNAE) and 1925–1939 (KSRDIGAKQKMHDEE). Disordered regions lie at residues 1826–1849 (GELEAEQKRNAESVKGMRKSERRI) and 1909–1939 (EERADIAESQVNKLRAKSRDIGAKQKMHDEE).

Belongs to the TRAFAC class myosin-kinesin ATPase superfamily. Myosin family. As to quaternary structure, muscle myosin is a hexameric protein that consists of 2 heavy chain subunits (MHC), 2 alkali light chain subunits (MLC) and 2 regulatory light chain subunits (MLC-2).

It localises to the cytoplasm. The protein resides in the myofibril. Its function is as follows. Muscle contraction. This Homo sapiens (Human) protein is Myosin-6 (MYH6).